The chain runs to 188 residues: Transmembrane protein 160 (188 aa).

The N-terminal 96 residues, 1-96 (MGGGWWWARA…ISFMQSDMGR (96 aa)), are a transit peptide targeting the mitochondrion. Residues 24 to 52 (PPQRPRSGGARGSFAPGHGPRAGASPPPV) are disordered. Ser48 carries the post-translational modification Phosphoserine. The next 2 helical transmembrane spans lie at 102–122 (FFLLGGLCVVWGSASYAVGLA) and 135–155 (AAVGAGAVLAASLLWACAVGL). A disordered region spans residues 168-188 (PEDDGTASAEGPDEAGRPPPE).

This sequence belongs to the TMEM160 family.

It is found in the mitochondrion inner membrane. The protein is Transmembrane protein 160 of Homo sapiens (Human).